A 68-amino-acid chain; its full sequence is Alpha/kappa-conotoxin-like pl14.2 (68 aa).

Positions 1 to 27 (MPSVRSVTCCCLLWMMFSVQLVTPGSP) are cleaved as a signal peptide. Positions 28-39 (ATAQLSGQRTAR) are excised as a propeptide. Cystine bridges form between Cys46–Cys61 and Cys50–Cys63. Position 64 is an arginine amide (Arg64). A propeptide spanning residues 65–68 (GKRD) is cleaved from the precursor.

Belongs to the conotoxin J superfamily. As to expression, expressed by the venom duct.

The protein localises to the secreted. Highly inhibits both nicotinic acetylcholine receptors (neuronal (alpha-3/beta-4) and muscular (alpha-1/beta-1/epsilon/delta) subtypes) and the voltage-gated potassium channel Kv1.6/KCNA6 subtype. In Conus planorbis (Planorbis cone), this protein is Alpha/kappa-conotoxin-like pl14.2.